The sequence spans 506 residues: Pleckstrin homology domain-containing family D member 1 (506 aa).

The PH domain maps to 28-136 (KVQLYGVLWK…WLEMLQESGK (109 aa)). The stretch at 146–391 (EAMIKSLEAQ…KVRNKEKEER (246 aa)) forms a coiled coil. R503 carries the post-translational modification Omega-N-methylarginine.

The protein belongs to the PLEKHD1 family.

This Homo sapiens (Human) protein is Pleckstrin homology domain-containing family D member 1 (PLEKHD1).